A 168-amino-acid polypeptide reads, in one-letter code: Phosphopantetheine adenylyltransferase (168 aa).

T9 serves as a coordination point for substrate. Residues T9–F10 and H17 contribute to the ATP site. K41, L73, and R87 together coordinate substrate. Residues G88–R90, E98, and Y123–T129 contribute to the ATP site.

This sequence belongs to the bacterial CoaD family. In terms of assembly, homohexamer. It depends on Mg(2+) as a cofactor.

Its subcellular location is the cytoplasm. The enzyme catalyses (R)-4'-phosphopantetheine + ATP + H(+) = 3'-dephospho-CoA + diphosphate. The protein operates within cofactor biosynthesis; coenzyme A biosynthesis; CoA from (R)-pantothenate: step 4/5. Reversibly transfers an adenylyl group from ATP to 4'-phosphopantetheine, yielding dephospho-CoA (dPCoA) and pyrophosphate. The chain is Phosphopantetheine adenylyltransferase from Ralstonia nicotianae (strain ATCC BAA-1114 / GMI1000) (Ralstonia solanacearum).